The primary structure comprises 620 residues: Glutathione-regulated potassium-efflux system protein KefC (620 aa).

Topologically, residues 1 to 3 are periplasmic; the sequence is MDS. Residues 4–24 form a helical membrane-spanning segment; sequence HTLVQALIYLGSAALIVPIAV. A topological domain (cytoplasmic) is located at residue R25. A helical membrane pass occupies residues 26–46; it reads LGLGSVLGYLIAGCIIGPWGL. At 47–53 the chain is on the periplasmic side; it reads RLVTDAE. Residues 54-74 form a helical membrane-spanning segment; the sequence is SILHFAEIGVVLMLFIIGLEL. Topologically, residues 75-89 are cytoplasmic; it reads DPQRLWKLRAAVFGG. Residues 90–110 form a helical membrane-spanning segment; sequence GALQMVICGGLLGLFCMLLGL. Residues 111-113 lie on the Periplasmic side of the membrane; it reads RWQ. A helical transmembrane segment spans residues 114 to 134; it reads VAELIGMTLALSSTAIAMQAM. Residues 135 to 148 lie on the Cytoplasmic side of the membrane; sequence NERNLMVTQMGRSA. Residues 149 to 169 traverse the membrane as a helical segment; it reads FAVLLFQDIAAIPLVAMIPLL. The Periplasmic portion of the chain corresponds to 170–177; that stretch reads AASSASTT. A helical membrane pass occupies residues 178–198; sequence MGAFALSALKVAGALVLVVLL. At 199-213 the chain is on the cytoplasmic side; sequence GRYVTRPALRFVARS. A helical transmembrane segment spans residues 214–233; it reads GLREVFSAVALFLVFGFGLL. The Periplasmic segment spans residues 234-236; that stretch reads LEE. The chain crosses the membrane as a helical span at residues 237–254; the sequence is VGLSMAMGAFLAGVLLAS. Topologically, residues 255–269 are cytoplasmic; sequence SEYRHALESDIEPFK. A helical transmembrane segment spans residues 270–290; sequence GLLLGLFFIGVGMSIDFGTLI. At 291 to 293 the chain is on the periplasmic side; sequence ENP. A helical transmembrane segment spans residues 294-314; that stretch reads LRIVILLLGFLIIKIAMLWLI. The Cytoplasmic portion of the chain corresponds to 315–326; the sequence is ARPLQVPNKQRR. The helical transmembrane segment at 327–347 threads the bilayer; it reads WFAVLLGQGSEFAFVVFGAAQ. Residues 348–358 lie on the Periplasmic side of the membrane; that stretch reads MANVLEPEWAK. Residues 359–379 form a helical membrane-spanning segment; the sequence is SLTLAVALSMAATPILLVILN. The Cytoplasmic portion of the chain corresponds to 380–620; that stretch reads RLEQSSTEEA…ADEPETKPSS (241 aa). Residues 399 to 518 enclose the RCK N-terminal domain; the sequence is QPRVIIAGFG…AGVEKPERET (120 aa). The interval 597 to 620 is disordered; the sequence is GWQGTEEGKHTGNMADEPETKPSS.

The protein belongs to the monovalent cation:proton antiporter 2 (CPA2) transporter (TC 2.A.37) family. KefC subfamily. As to quaternary structure, homodimer. Interacts with the regulatory subunit KefF.

The protein localises to the cell inner membrane. Pore-forming subunit of a potassium efflux system that confers protection against electrophiles. Catalyzes K(+)/H(+) antiport. The protein is Glutathione-regulated potassium-efflux system protein KefC of Escherichia coli O157:H7.